A 453-amino-acid polypeptide reads, in one-letter code: MDRRIFGLETEFGVTCAFEGQRKLSPDEVARYLFRKVVSWGRSSNVFLKNGARLYLDVGSHPEYATPECDDVRQLVVHDRAGERTLEGLLTDAERRLEEEGIAGEVFLFKNNTDSAGNSYGCHENYLVSRHGEFGKLSDVLIPFLVSRQLIVGAGKVVQTPRGAVYSLSQRADHIWEGVSSATTRSRPIINTRDEPHADAERYRRLHVIVGDSNMSETTTMLKLGATDLVLRMVEEGVVLREMTMENPIRAIREISHDMTGRKPVRLANGREASALEIQEEYLEKAKEFVESRGLQTPTIKRVLDLWERALRAVATQDFSLVDREVDWVIKKKLLDRYMAKHDLPLTSPRIARLDLAYHDIHRKRGLHYMLAERGMAERVCSDIEVFEALSVPPQTTRAKLRGDFVRAAQEKRRDFTVDWVHLKLNDQAQRTVLCKDPFKAVDDRVERLIDSM.

E9 is a binding site for Mg(2+). R53 serves as a coordination point for ATP. Residue Y55 coordinates Mg(2+). Catalysis depends on D57, which acts as the Proton acceptor. Residue E63 coordinates Mg(2+). Positions 66 and 420 each coordinate ATP.

It belongs to the Pup ligase/Pup deamidase family. Pup-conjugating enzyme subfamily.

It catalyses the reaction ATP + [prokaryotic ubiquitin-like protein]-L-glutamate + [protein]-L-lysine = ADP + phosphate + N(6)-([prokaryotic ubiquitin-like protein]-gamma-L-glutamyl)-[protein]-L-lysine.. The protein operates within protein degradation; proteasomal Pup-dependent pathway. It functions in the pathway protein modification; protein pupylation. Its function is as follows. Catalyzes the covalent attachment of the prokaryotic ubiquitin-like protein modifier Pup to the proteasomal substrate proteins, thereby targeting them for proteasomal degradation. This tagging system is termed pupylation. The ligation reaction involves the side-chain carboxylate of the C-terminal glutamate of Pup and the side-chain amino group of a substrate lysine. The polypeptide is Pup--protein ligase (Kineococcus radiotolerans (strain ATCC BAA-149 / DSM 14245 / SRS30216)).